A 58-amino-acid polypeptide reads, in one-letter code: Small ribosomal subunit protein bS21 (58 aa).

Positions 37 to 58 are disordered; it reads FYDKPSVKKRAKSKAAAKYRGR. Residues 43 to 58 show a composition bias toward basic residues; that stretch reads VKKRAKSKAAAKYRGR.

It belongs to the bacterial ribosomal protein bS21 family.

The protein is Small ribosomal subunit protein bS21 (rpsU) of Chlamydia muridarum (strain MoPn / Nigg).